A 90-amino-acid chain; its full sequence is U7-theraphotoxin-Hhn1k (90 aa).

A signal peptide spans 1 to 19 (MKTAIFTVVLALAVFAVLS). The propeptide occupies 20–50 (FGWEANEKALSEEFTELIHEKEAASETEARE). Intrachain disulfides connect Cys51–Cys65 and Cys58–Cys70.

It belongs to the neurotoxin 10 (Hwtx-1) family. 13 (Hntx-13) subfamily. As to expression, expressed by the venom gland.

It is found in the secreted. In terms of biological role, ion channel inhibitor. This chain is U7-theraphotoxin-Hhn1k, found in Cyriopagopus hainanus (Chinese bird spider).